Consider the following 2367-residue polypeptide: RNA1 polyprotein (2367 aa).

Topologically, residues 587-1194 (AKCEDLAVVS…GGRLLLILCS (608 aa)) are cytoplasmic. An SF3 helicase domain is found at 776-940 (ELRTLRNDMA…AGVAFNPHDS (165 aa)). 804-811 (GPPGVGKT) lines the ATP pocket. The helical transmembrane segment at 1195–1215 (CMLLGIACYTFFNALAILIGG) threads the bilayer. Topologically, residues 1216 to 1235 (TSVAAGAAAMVDIGACGSTS) are lumenal. The region spanning 1258–1468 (PAVWSEETGH…YVCKFPHIEV (211 aa)) is the Peptidase C3 domain. Active-site for picornain 3C-like protease activity residues include histidine 1302, glutamate 1339, and cysteine 1432. One can recognise a RdRp catalytic domain in the interval 1832 to 1957 (DKMYCCDYSK…GIHPNIESAF (126 aa)).

It belongs to the nepoviruses RNA1 polyprotein family. Specific enzymatic cleavages by picornain 3C-like protease in vivo yield mature proteins. Picornain 3C-like protease is autocatalytically processed. In terms of processing, VPg is uridylylated by the polymerase and is covalently linked to the 5'-end of genomic RNA. This uridylylated form acts as a nucleotide-peptide primer for the polymerase.

The protein resides in the host endoplasmic reticulum lumen. It localises to the host endoplasmic reticulum membrane. The enzyme catalyses RNA(n) + a ribonucleoside 5'-triphosphate = RNA(n+1) + diphosphate. Picornain 3C-like protease is a thiol protease that cleaves the P1 and P2 polyproteins. The chain is RNA1 polyprotein from Fragaria vesca (Woodland strawberry).